Reading from the N-terminus, the 940-residue chain is Phosphoenolpyruvate carboxylase (940 aa).

Residues His-138 and Lys-603 contribute to the active site.

The protein belongs to the PEPCase type 1 family. It depends on Mg(2+) as a cofactor.

It carries out the reaction oxaloacetate + phosphate = phosphoenolpyruvate + hydrogencarbonate. In terms of biological role, forms oxaloacetate, a four-carbon dicarboxylic acid source for the tricarboxylic acid cycle. The protein is Phosphoenolpyruvate carboxylase of Streptococcus thermophilus (strain ATCC BAA-250 / LMG 18311).